The sequence spans 447 residues: Elongation factor 1-alpha (447 aa).

The tr-type G domain occupies 5-230 (KIHISIVVIG…DQINEPKRPS (226 aa)). A G1 region spans residues 14–21 (GHVDSGKS). 14–21 (GHVDSGKS) provides a ligand contact to GTP. Lysine 55 bears the N6,N6-dimethyllysine mark. The segment at 70–74 (GITID) is G2. Lysine 79 bears the N6,N6,N6-trimethyllysine mark. The tract at residues 91–94 (DAPG) is G3. GTP contacts are provided by residues 91–95 (DAPGH) and 153–156 (NKMD). The segment at 153–156 (NKMD) is G4. At lysine 187 the chain carries N6,N6,N6-trimethyllysine. The interval 194-196 (SGF) is G5. Lysine 261 bears the N6-methyllysine mark. 5-glutamyl glycerylphosphorylethanolamine is present on glutamate 289. Lysine 306 carries the N6,N6,N6-trimethyllysine modification. A 5-glutamyl glycerylphosphorylethanolamine modification is found at glutamate 362. N6,N6,N6-trimethyllysine is present on lysine 396.

It belongs to the TRAFAC class translation factor GTPase superfamily. Classic translation factor GTPase family. EF-Tu/EF-1A subfamily.

It localises to the cytoplasm. Functionally, this protein promotes the GTP-dependent binding of aminoacyl-tRNA to the A-site of ribosomes during protein biosynthesis. The sequence is that of Elongation factor 1-alpha from Hordeum vulgare (Barley).